An 88-amino-acid polypeptide reads, in one-letter code: Cytochrome c oxidase subunit 6B2 (88 aa).

The tract at residues 1 to 21 (MLGVQAQMPAPGQWTTPPFDP) is disordered. Residues 29–75 (TRNCYQNFLDYHRCVKTMDRRGKNTQACDYYFRVFHSLCPVSWVQRW) enclose the CHCH domain. Positions 32–42 (CYQNFLDYHRC) match the Cx9C motif motif. 2 disulfides stabilise this stretch: Cys32/Cys67 and Cys42/Cys56. Positions 56-67 (CDYYFRVFHSLC) match the Cx10C motif motif.

It belongs to the cytochrome c oxidase subunit 6B family. In terms of assembly, component of the cytochrome c oxidase (complex IV, CIV), a multisubunit enzyme composed of 14 subunits. The complex is composed of a catalytic core of 3 subunits MT-CO1, MT-CO2 and MT-CO3, encoded in the mitochondrial DNA, and 11 supernumerary subunits COX4I, COX5A, COX5B, COX6A, COX6B, COX6C, COX7A, COX7B, COX7C, COX8 and NDUFA4, which are encoded in the nuclear genome. The complex exists as a monomer or a dimer and forms supercomplexes (SCs) in the inner mitochondrial membrane with NADH-ubiquinone oxidoreductase (complex I, CI) and ubiquinol-cytochrome c oxidoreductase (cytochrome b-c1 complex, complex III, CIII), resulting in different assemblies (supercomplex SCI(1)III(2)IV(1) and megacomplex MCI(2)III(2)IV(2)). In terms of tissue distribution, testis specific.

The protein resides in the mitochondrion inner membrane. It participates in energy metabolism; oxidative phosphorylation. Functionally, component of the cytochrome c oxidase, the last enzyme in the mitochondrial electron transport chain which drives oxidative phosphorylation. The respiratory chain contains 3 multisubunit complexes succinate dehydrogenase (complex II, CII), ubiquinol-cytochrome c oxidoreductase (cytochrome b-c1 complex, complex III, CIII) and cytochrome c oxidase (complex IV, CIV), that cooperate to transfer electrons derived from NADH and succinate to molecular oxygen, creating an electrochemical gradient over the inner membrane that drives transmembrane transport and the ATP synthase. Cytochrome c oxidase is the component of the respiratory chain that catalyzes the reduction of oxygen to water. Electrons originating from reduced cytochrome c in the intermembrane space (IMS) are transferred via the dinuclear copper A center (CU(A)) of subunit 2 and heme A of subunit 1 to the active site in subunit 1, a binuclear center (BNC) formed by heme A3 and copper B (CU(B)). The BNC reduces molecular oxygen to 2 water molecules using 4 electrons from cytochrome c in the IMS and 4 protons from the mitochondrial matrix. In Rattus norvegicus (Rat), this protein is Cytochrome c oxidase subunit 6B2 (Cox6b2).